The sequence spans 259 residues: Type III pantothenate kinase (259 aa).

6 to 13 (DVGNTNCT) contributes to the ATP binding site. Residue 107–110 (GSDR) participates in substrate binding. Residue D109 is the Proton acceptor of the active site. D129 contacts K(+). T132 lines the ATP pocket. T184 contacts substrate.

It belongs to the type III pantothenate kinase family. As to quaternary structure, homodimer. NH4(+) is required as a cofactor. Requires K(+) as cofactor.

The protein localises to the cytoplasm. It catalyses the reaction (R)-pantothenate + ATP = (R)-4'-phosphopantothenate + ADP + H(+). Its pathway is cofactor biosynthesis; coenzyme A biosynthesis; CoA from (R)-pantothenate: step 1/5. Its function is as follows. Catalyzes the phosphorylation of pantothenate (Pan), the first step in CoA biosynthesis. This chain is Type III pantothenate kinase, found in Listeria welshimeri serovar 6b (strain ATCC 35897 / DSM 20650 / CCUG 15529 / CIP 8149 / NCTC 11857 / SLCC 5334 / V8).